The primary structure comprises 215 residues: Probable transaldolase (215 aa).

Lys-83 functions as the Schiff-base intermediate with substrate in the catalytic mechanism.

The protein belongs to the transaldolase family. Type 3B subfamily.

The protein localises to the cytoplasm. The catalysed reaction is D-sedoheptulose 7-phosphate + D-glyceraldehyde 3-phosphate = D-erythrose 4-phosphate + beta-D-fructose 6-phosphate. The protein operates within carbohydrate degradation; pentose phosphate pathway; D-glyceraldehyde 3-phosphate and beta-D-fructose 6-phosphate from D-ribose 5-phosphate and D-xylulose 5-phosphate (non-oxidative stage): step 2/3. Transaldolase is important for the balance of metabolites in the pentose-phosphate pathway. The chain is Probable transaldolase from Clostridium kluyveri (strain NBRC 12016).